A 303-amino-acid polypeptide reads, in one-letter code: Ferrochelatase (303 aa).

2 residues coordinate Fe cation: H185 and E262.

Belongs to the ferrochelatase family.

Its subcellular location is the cytoplasm. The catalysed reaction is heme b + 2 H(+) = protoporphyrin IX + Fe(2+). It functions in the pathway porphyrin-containing compound metabolism; protoheme biosynthesis; protoheme from protoporphyrin-IX: step 1/1. Functionally, catalyzes the ferrous insertion into protoporphyrin IX. In Campylobacter jejuni (strain RM1221), this protein is Ferrochelatase.